A 1172-amino-acid chain; its full sequence is Laminin subunit beta-3 (1172 aa).

Positions 1-17 are cleaved as a signal peptide; the sequence is MRPFFLLCFALPGLLHA. The 228-residue stretch at 22-249 folds into the Laminin N-terminal domain; sequence SRGACYPPVG…AVSQLRLQGS (228 aa). N220 is a glycosylation site (N-linked (GlcNAc...) asparagine). Intrachain disulfides connect C250/C259, C252/C279, C281/C290, C293/C313, C316/C325, C318/C343, C346/C355, C358/C376, C379/C392, C381/C399, C401/C410, C413/C428, C431/C444, C433/C451, C453/C462, C465/C478, C481/C493, C483/C500, C502/C511, C519/C531, C534/C546, C536/C553, C555/C564, and C567/C578. Laminin EGF-like domains are found at residues 250–315, 316–378, 379–430, 431–480, 481–533, and 534–580; these read CFCH…ECQR, CDCN…TCIS, CECD…GCHR, CDCN…GCEP, CACD…GCRA, and CDCD…VCVA. The segment at 579–785 is domain II; sequence VACHPCFQTY…SLPDLTPTFN (207 aa). N604 is a glycosylation site (N-linked (GlcNAc...) asparagine). A coiled-coil region spans residues 723 to 757; sequence EQSAQAAQQVSDSSRLLDQLRDSRREAERLVRQAG. Residues 786–816 form a domain alpha region; that stretch reads KLCGNSRQMACTPISCPGELCPQDNGTACGS. N810 carries N-linked (GlcNAc...) asparagine glycosylation. The interval 817–1170 is domain I; sequence RCRGVLPRAG…INGRVLYYAT (354 aa). Coiled coils occupy residues 831–884 and 948–1133; these read MAGQ…MEED and VLSQ…ELEL.

In terms of assembly, laminin is a complex glycoprotein, consisting of three different polypeptide chains (alpha, beta, gamma), which are bound to each other by disulfide bonds into a cross-shaped molecule comprising one long and three short arms with globules at each end. Beta-3 is a subunit of laminin-5 (laminin-332 or epiligrin/kalinin/nicein). Interacts with ECM1. In terms of tissue distribution, found in the basement membranes (major component).

It localises to the secreted. It is found in the extracellular space. The protein resides in the extracellular matrix. Its subcellular location is the basement membrane. Functionally, binding to cells via a high affinity receptor, laminin is thought to mediate the attachment, migration and organization of cells into tissues during embryonic development by interacting with other extracellular matrix components. This is Laminin subunit beta-3 (LAMB3) from Homo sapiens (Human).